We begin with the raw amino-acid sequence, 781 residues long: ATP-dependent 6-phosphofructokinase (781 aa).

Residues 1–394 form an N-terminal catalytic PFK domain 1 region; it reads MATWMEGKYV…NLATYIKLSK (394 aa). ATP contacts are provided by residues Gly-27, 90 to 91, and 120 to 123; these read RC and GDGS. Asp-121 serves as a coordination point for Mg(2+). Residues 166-168, Arg-203, 210-212, Glu-266, Arg-294, and 300-303 contribute to the substrate site; these read SID, MGR, and HVQR. The Proton acceptor role is filled by Asp-168. An interdomain linker region spans residues 395-409; sequence IEQPRQSVMSSENNL. The interval 410-781 is C-terminal regulatory PFK domain 2; that stretch reads RIGIVNVGAP…ESIMAGTDRK (372 aa). Beta-D-fructose 2,6-bisphosphate is bound by residues Arg-479, 537-541, Arg-575, 582-584, Asp-638, Arg-664, 670-673, and Arg-745; these read TISNN, MGG, and HMQQ.

This sequence belongs to the phosphofructokinase type A (PFKA) family. ATP-dependent PFK group I subfamily. Eukaryotic two domain clade 'E' sub-subfamily. As to quaternary structure, homotetramer. Mg(2+) is required as a cofactor.

Its subcellular location is the cytoplasm. The enzyme catalyses beta-D-fructose 6-phosphate + ATP = beta-D-fructose 1,6-bisphosphate + ADP + H(+). It functions in the pathway carbohydrate degradation; glycolysis; D-glyceraldehyde 3-phosphate and glycerone phosphate from D-glucose: step 3/4. Allosterically activated by ADP, AMP, or fructose 2,6-bisphosphate, and allosterically inhibited by ATP or citrate. Functionally, catalyzes the phosphorylation of D-fructose 6-phosphate to fructose 1,6-bisphosphate by ATP, the first committing step of glycolysis. The polypeptide is ATP-dependent 6-phosphofructokinase (PFK) (Schistosoma mansoni (Blood fluke)).